A 689-amino-acid chain; its full sequence is Glycine--tRNA ligase beta subunit (689 aa).

Belongs to the class-II aminoacyl-tRNA synthetase family. Tetramer of two alpha and two beta subunits.

The protein resides in the cytoplasm. It carries out the reaction tRNA(Gly) + glycine + ATP = glycyl-tRNA(Gly) + AMP + diphosphate. This Dichelobacter nodosus (strain VCS1703A) protein is Glycine--tRNA ligase beta subunit.